Reading from the N-terminus, the 710-residue chain is Pentatricopeptide repeat-containing protein At1g02060, chloroplastic (710 aa).

The transit peptide at 1 to 21 (MVSSVPKLHALFVSKSQPVLR) directs the protein to the chloroplast. PPR repeat units follow at residues 137–171 (QDRYFNSLIRSYGNAGLFQESVKLFQTMKQMGISP), 172–202 (SVLTFNSLLSILLKRGRTGMAHDLFDEMRRT), 208–242 (DSYTFNTLINGFCKNSMVDEAFRIFKDMELYHCNP), 243–277 (DVVTYNTIIDGLCRAGKVKIAHNVLSGMLKKATDV), 280–314 (NVVSYTTLVRGYCMKQEIDEAVLVFHDMLSRGLKP), 315–351 (NAVTYNTLIKGLSEAHRYDEIKDILIGGNDAFTTFAP), 352–386 (DACTFNILIKAHCDAGHLDAAMKVFQEMLNMKLHP), 387–421 (DSASYSVLIRTLCMRNEFDRAETLFNELFEKEVLL), 429–459 (LAAAYNPMFEYLCANGKTKQAEKVFRQLMKR), 463–497 (DPPSYKTLITGHCREGKFKPAYELLVLMLRREFVP), 498–532 (DLETYELLIDGLLKIGEALLAHDTLQRMLRSSYLP), and 533–567 (VATTFHSVLAELAKRKFANESFCLVTLMLEKRIRQ).

Belongs to the PPR family. P subfamily.

The protein localises to the plastid. Its subcellular location is the chloroplast. This chain is Pentatricopeptide repeat-containing protein At1g02060, chloroplastic, found in Arabidopsis thaliana (Mouse-ear cress).